The chain runs to 260 residues: Thiazole synthase (260 aa).

Lys96 serves as the catalytic Schiff-base intermediate with DXP. 1-deoxy-D-xylulose 5-phosphate-binding positions include Gly157, Ala183 to Gly184, and Ala205 to Ser206.

The protein belongs to the ThiG family. Homotetramer. Forms heterodimers with either ThiH or ThiS.

The protein resides in the cytoplasm. It catalyses the reaction [ThiS sulfur-carrier protein]-C-terminal-Gly-aminoethanethioate + 2-iminoacetate + 1-deoxy-D-xylulose 5-phosphate = [ThiS sulfur-carrier protein]-C-terminal Gly-Gly + 2-[(2R,5Z)-2-carboxy-4-methylthiazol-5(2H)-ylidene]ethyl phosphate + 2 H2O + H(+). Its pathway is cofactor biosynthesis; thiamine diphosphate biosynthesis. In terms of biological role, catalyzes the rearrangement of 1-deoxy-D-xylulose 5-phosphate (DXP) to produce the thiazole phosphate moiety of thiamine. Sulfur is provided by the thiocarboxylate moiety of the carrier protein ThiS. In vitro, sulfur can be provided by H(2)S. In Corynebacterium glutamicum (strain ATCC 13032 / DSM 20300 / JCM 1318 / BCRC 11384 / CCUG 27702 / LMG 3730 / NBRC 12168 / NCIMB 10025 / NRRL B-2784 / 534), this protein is Thiazole synthase.